Here is a 221-residue protein sequence, read N- to C-terminus: Arginine ABC transporter permease protein ArtQ (221 aa).

Positions 13-206 (ALMTLGLAVC…AVTLISQVGI (194 aa)) constitute an ABC transmembrane type-1 domain. 5 helical membrane-spanning segments follow: residues 17-37 (LGLA…FAVL), 49-69 (VFVA…VYFG), 82-102 (IEFG…AAYA), 121-141 (GAAL…PQVW), and 186-206 (TWYG…QVGI).

It belongs to the binding-protein-dependent transport system permease family. HisMQ subfamily. The complex is composed of two ATP-binding proteins (ArtP), two transmembrane proteins (ArtM and ArtQ) and a solute-binding protein (ArtI).

It is found in the cell inner membrane. Its function is as follows. Part of the ABC transporter complex ArtPIQM involved in arginine transport. Probably responsible for the translocation of the substrate across the membrane. The chain is Arginine ABC transporter permease protein ArtQ (artQ) from Haemophilus influenzae (strain ATCC 51907 / DSM 11121 / KW20 / Rd).